Reading from the N-terminus, the 260-residue chain is MSHHWGYGKHNGPEHWHKDFPIAKGERQSPVDIDTHTAKYDPSLKPLSVSYDQATSLRILNNGHAFNVEFDDSQDKAVLKGGPLDGTYRLIQFHFHWGSLDGQGSEHTVDKKKYAAELHLVHWNTKYGDFGKAVQQPDGLAVLGIFLKVGSAKPGLQKVVDVLDSIKTKGKSADFTNFDPRGLLPESLDYWTYPGSLTTPPLLECVTWIVLKEPISVSSEQVLKFRKLNFNGEGEPEELMVDNWRPAQPLKNRQIKASFK.

Ser-2 is subject to N-acetylserine. Ser-2 bears the Phosphoserine mark. One can recognise an Alpha-carbonic anhydrase domain in the interval 3–259; sequence HHWGYGKHNG…LKNRQIKASF (257 aa). The active-site Proton donor/acceptor is the His-64. His-94, His-96, and His-119 together coordinate Zn(2+). 2 positions are modified to phosphoserine: Ser-165 and Ser-172. 198-199 contributes to the substrate binding site; it reads TT.

The protein belongs to the alpha-carbonic anhydrase family. Interacts with SLC4A4. Interaction with SLC4A7 regulates SLC4A7 transporter activity. Interacts with SLC26A6 isoform 4 (via C-terminus cytoplasmic domain). Requires Zn(2+) as cofactor. Co(2+) is required as a cofactor.

The protein localises to the cytoplasm. It localises to the cell membrane. The enzyme catalyses hydrogencarbonate + H(+) = CO2 + H2O. The catalysed reaction is urea = cyanamide + H2O. Its activity is regulated as follows. Activated by X-ray, histamine, L-adrenaline, L- and D-phenylalanine, L- and D-histidine, L-His-OMe and beta-Ala-His (carnosine). Competitively inhibited by saccharin, thioxolone, coumarins, 667-coumate, celecoxib (Celebrex), valdecoxib (Bextra), SC-125, SC-560, diclofenac, acetate, azide, bromide, sulfonamide derivatives such as acetazolamide (AZA), methazolamide (MZA), ethoxzolamide (EZA), dichlorophenamide (DCP), brinzolamide, dansylamide, thiabendazole-5-sulfonamide, trifluoromethane sulfonamide and N-hydroxysulfamide, fructose-based sugar sulfamate RWJ-37497, and Foscarnet (phosphonoformate trisodium salt). Repressed strongly by hydrogen sulfide(HS) and weakly by nitrate (NO(3)). Esterase activity weakly reduced by cyanamide. N-hydroxyurea interferes with zinc binding and inhibit activity. Catalyzes the reversible hydration of carbon dioxide. Can also hydrate cyanamide to urea. Stimulates the chloride-bicarbonate exchange activity of SLC26A6. Essential for bone resorption and osteoclast differentiation. Involved in the regulation of fluid secretion into the anterior chamber of the eye. Contributes to intracellular pH regulation in the duodenal upper villous epithelium during proton-coupled peptide absorption. In Homo sapiens (Human), this protein is Carbonic anhydrase 2 (CA2).